Here is a 612-residue protein sequence, read N- to C-terminus: Dihydroxy-acid dehydratase (612 aa).

Aspartate 81 provides a ligand contact to Mg(2+). Cysteine 122 provides a ligand contact to [2Fe-2S] cluster. Aspartate 123 and lysine 124 together coordinate Mg(2+). Lysine 124 is subject to N6-carboxylysine. Cysteine 193 lines the [2Fe-2S] cluster pocket. Position 489 (glutamate 489) interacts with Mg(2+). The active-site Proton acceptor is serine 515.

It belongs to the IlvD/Edd family. Homodimer. Requires [2Fe-2S] cluster as cofactor. Mg(2+) is required as a cofactor.

It carries out the reaction (2R)-2,3-dihydroxy-3-methylbutanoate = 3-methyl-2-oxobutanoate + H2O. The catalysed reaction is (2R,3R)-2,3-dihydroxy-3-methylpentanoate = (S)-3-methyl-2-oxopentanoate + H2O. The protein operates within amino-acid biosynthesis; L-isoleucine biosynthesis; L-isoleucine from 2-oxobutanoate: step 3/4. It functions in the pathway amino-acid biosynthesis; L-valine biosynthesis; L-valine from pyruvate: step 3/4. Functionally, functions in the biosynthesis of branched-chain amino acids. Catalyzes the dehydration of (2R,3R)-2,3-dihydroxy-3-methylpentanoate (2,3-dihydroxy-3-methylvalerate) into 2-oxo-3-methylpentanoate (2-oxo-3-methylvalerate) and of (2R)-2,3-dihydroxy-3-methylbutanoate (2,3-dihydroxyisovalerate) into 2-oxo-3-methylbutanoate (2-oxoisovalerate), the penultimate precursor to L-isoleucine and L-valine, respectively. This is Dihydroxy-acid dehydratase from Teredinibacter turnerae (strain ATCC 39867 / T7901).